The following is a 360-amino-acid chain: Protein Wnt-2 (360 aa).

The N-terminal stretch at 1 to 25 (MNAPLGGIWLWLPLLLTWLTPEVNS) is a signal peptide. 11 disulfides stabilise this stretch: Cys76/Cys87, Cys127/Cys135, Cys137/Cys157, Cys206/Cys220, Cys208/Cys215, Cys278/Cys309, Cys294/Cys304, Cys308/Cys348, Cys324/Cys339, Cys326/Cys336, and Cys331/Cys332. Ser212 carries O-palmitoleoyl serine; by PORCN lipidation. Asn295 carries N-linked (GlcNAc...) asparagine glycosylation.

Belongs to the Wnt family. Post-translationally, palmitoleoylation is required for efficient binding to frizzled receptors. Depalmitoleoylation leads to Wnt signaling pathway inhibition. In terms of tissue distribution, expressed in brain in the thalamus, in fetal and adult lung and in placenta.

The protein localises to the secreted. Its subcellular location is the extracellular space. The protein resides in the extracellular matrix. In terms of biological role, ligand for members of the frizzled family of seven transmembrane receptors. Functions in the canonical Wnt signaling pathway that results in activation of transcription factors of the TCF/LEF family. Functions as a upstream regulator of FGF10 expression. Plays an important role in embryonic lung development. May contribute to embryonic brain development by regulating the proliferation of dopaminergic precursors and neurons. This is Protein Wnt-2 (WNT2) from Homo sapiens (Human).